The sequence spans 338 residues: Activator of 90 kDa heat shock protein ATPase homolog 1 (338 aa).

An N6-acetyllysine modification is found at K3. Residue K182 forms a Glycyl lysine isopeptide (Lys-Gly) (interchain with G-Cter in SUMO1) linkage. A Phosphoserine modification is found at S193. K203 participates in a covalent cross-link: Glycyl lysine isopeptide (Lys-Gly) (interchain with G-Cter in SUMO2). K212 is subject to N6-acetyllysine. A Phosphotyrosine; by ABL modification is found at Y223. Residue S258 is modified to Phosphoserine.

This sequence belongs to the AHA1 family. In terms of assembly, interacts with HSPCA/HSP90. Interacts (phosphorylated on Tyr-223) with HSP90AA1; the interaction activates HSP90AA1 ATPase activity. Interacts with HSP90AB1. Interacts with GCH1. Interacts with SRPK1. Interacts with FLCN. As to quaternary structure, (Microbial infection) Interacts with vesicular stomatitis virus glycoprotein (VSV G) (via cytoplasmic tail). Post-translationally, phosphorylation at Tyr-223 enhances binding to chaperone HSP90AA1. In terms of tissue distribution, expressed in numerous tissues, including brain, heart, skeletal muscle and kidney and, at lower levels, liver and placenta.

Its subcellular location is the cytoplasm. It localises to the cytosol. It is found in the endoplasmic reticulum. Acts as a co-chaperone of HSP90AA1. Activates the ATPase activity of HSP90AA1 leading to increase in its chaperone activity. Competes with the inhibitory co-chaperone FNIP1 for binding to HSP90AA1, thereby providing a reciprocal regulatory mechanism for chaperoning of client proteins. Competes with the inhibitory co-chaperone TSC1 for binding to HSP90AA1, thereby providing a reciprocal regulatory mechanism for chaperoning of client proteins. In Homo sapiens (Human), this protein is Activator of 90 kDa heat shock protein ATPase homolog 1 (AHSA1).